Consider the following 444-residue polypeptide: Tubulin beta-4 chain (444 aa).

Residues glutamine 11, glutamate 69, serine 138, glycine 142, threonine 143, glycine 144, asparagine 204, and asparagine 226 each contribute to the GTP site. Glutamate 69 contacts Mg(2+).

This sequence belongs to the tubulin family. Dimer of alpha and beta chains. A typical microtubule is a hollow water-filled tube with an outer diameter of 25 nm and an inner diameter of 15 nM. Alpha-beta heterodimers associate head-to-tail to form protofilaments running lengthwise along the microtubule wall with the beta-tubulin subunit facing the microtubule plus end conferring a structural polarity. Microtubules usually have 13 protofilaments but different protofilament numbers can be found in some organisms and specialized cells. Mg(2+) is required as a cofactor.

The protein resides in the cytoplasm. Its subcellular location is the cytoskeleton. Tubulin is the major constituent of microtubules, a cylinder consisting of laterally associated linear protofilaments composed of alpha- and beta-tubulin heterodimers. Microtubules grow by the addition of GTP-tubulin dimers to the microtubule end, where a stabilizing cap forms. Below the cap, tubulin dimers are in GDP-bound state, owing to GTPase activity of alpha-tubulin. This chain is Tubulin beta-4 chain (TUBB4), found in Arabidopsis thaliana (Mouse-ear cress).